A 285-amino-acid chain; its full sequence is UPF0354 protein SACOL1793 (285 aa).

The protein belongs to the UPF0354 family.

The sequence is that of UPF0354 protein SACOL1793 from Staphylococcus aureus (strain COL).